Here is a 233-residue protein sequence, read N- to C-terminus: uncharacterized protein (233 aa).

It belongs to the LutC/YkgG family.

This is an uncharacterized protein from Neisseria meningitidis serogroup B (strain ATCC BAA-335 / MC58).